Here is a 193-residue protein sequence, read N- to C-terminus: dCTP deaminase (193 aa).

Residues 110 to 115 (RSSLAR), Asp-128, 136 to 138 (VLE), Tyr-171, Lys-178, and Gln-182 contribute to the dCTP site. Catalysis depends on Glu-138, which acts as the Proton donor/acceptor.

It belongs to the dCTP deaminase family. Homotrimer.

The catalysed reaction is dCTP + H2O + H(+) = dUTP + NH4(+). It participates in pyrimidine metabolism; dUMP biosynthesis; dUMP from dCTP (dUTP route): step 1/2. Its function is as follows. Catalyzes the deamination of dCTP to dUTP. This is dCTP deaminase from Aeromonas hydrophila subsp. hydrophila (strain ATCC 7966 / DSM 30187 / BCRC 13018 / CCUG 14551 / JCM 1027 / KCTC 2358 / NCIMB 9240 / NCTC 8049).